A 1017-amino-acid chain; its full sequence is Formin-binding protein 4 (1017 aa).

2 disordered regions span residues 1–141 (MGKK…STDI) and 160–202 (PAAP…TSGW). The residue at position 18 (S18) is a Phosphoserine. Low complexity predominate over residues 40 to 69 (DSTAAVPSQPAPSAATTTTTAVTAAAASDD). 2 positions are modified to phosphoserine: S116 and S124. Over residues 130-141 (SKETNGNQSTDI) the composition is skewed to polar residues. T172 is modified (phosphothreonine). A compositionally biased stretch (low complexity) spans 181 to 200 (AATSTLSSSTSNGTDSTQTS). One can recognise a WW 1 domain in the interval 214–248 (GIEMGDWQEVWDENTGCYYYWNTQTNEVTWELPQY). Position 290 is an N6-acetyllysine (K290). Residue K301 forms a Glycyl lysine isopeptide (Lys-Gly) (interchain with G-Cter in SUMO1) linkage. K335 participates in a covalent cross-link: Glycyl lysine isopeptide (Lys-Gly) (interchain with G-Cter in SUMO2). A Glycyl lysine isopeptide (Lys-Gly) (interchain with G-Cter in SUMO1); alternate cross-link involves residue K348. A Glycyl lysine isopeptide (Lys-Gly) (interchain with G-Cter in SUMO2); alternate cross-link involves residue K348. Disordered regions lie at residues 421 to 519 (LEEG…TTPK), 621 to 676 (ESQW…CKES), 706 to 792 (PLPL…IKRK), and 899 to 994 (TATI…AERN). 5 positions are modified to phosphoserine: S427, S432, S435, S438, and S442. Positions 428–442 (VSGSSPRSDISQPAS) are enriched in polar residues. The segment covering 449-458 (LMSKRGKWKM) has biased composition (basic residues). Residues 461-474 (RATSPESTSRSSSK) show a composition bias toward low complexity. Position 464 is a phosphoserine (S464). The residue at position 479 (T479) is a Phosphothreonine. Positions 491 to 513 (NSEKIDENSDKEMEVEESPEKIK) are enriched in basic and acidic residues. Phosphoserine occurs at positions 499 and 508. T516 and T517 each carry phosphothreonine. Residue K519 forms a Glycyl lysine isopeptide (Lys-Gly) (interchain with G-Cter in SUMO1); alternate linkage. K519 is covalently cross-linked (Glycyl lysine isopeptide (Lys-Gly) (interchain with G-Cter in SUMO2); alternate). One can recognise a WW 2 domain in the interval 595–629 (NATPKGWSCHWDRDHRRYFYVNEQSGESQWEFPDG). Positions 627 to 637 (PDGEEEEEESQ) are enriched in acidic residues. Basic and acidic residues predominate over residues 640 to 656 (ENRDETLAKQTLKDKTG). The segment covering 657-671 (TDSNSTESSETSTGS) has biased composition (low complexity). Pro residues predominate over residues 706-732 (PLPLEMPPPPPPPPESPPPPPPPPPPA). Acidic residues predominate over residues 733 to 748 (EDGEIQEVEMEDEGSE). The segment covering 764-786 (SAQTTVVTSQSSVDSTISSSSST) has biased composition (low complexity). Pro residues predominate over residues 904–925 (EPPPPPPPPPPPPPPAPKMPPP). A compositionally biased stretch (basic residues) spans 929–941 (KKGRKDKAKKSKT). The span at 957–970 (LDEEDNSSSSEEDR) shows a compositional bias: acidic residues. 3 positions are modified to phosphoserine: S963, S964, and S965. The span at 971–982 (ESTAQKRIEEWK) shows a compositional bias: basic and acidic residues.

In terms of assembly, binds FMN1. Interacts with the Arg/Gly-rich-flanked Pro-rich of KHDRBS1/SAM68. Arginine methylation in these regions has no effect on this binding. As to expression, highly expressed in the eye.

The chain is Formin-binding protein 4 (FNBP4) from Homo sapiens (Human).